Consider the following 353-residue polypeptide: Chorismate synthase (353 aa).

NADP(+)-binding residues include Arg-48 and Arg-54. FMN-binding positions include 125-127 (RSS), 238-239 (NA), Gly-278, 293-297 (KPTSS), and Arg-319.

It belongs to the chorismate synthase family. Homotetramer. The cofactor is FMNH2.

It catalyses the reaction 5-O-(1-carboxyvinyl)-3-phosphoshikimate = chorismate + phosphate. Its pathway is metabolic intermediate biosynthesis; chorismate biosynthesis; chorismate from D-erythrose 4-phosphate and phosphoenolpyruvate: step 7/7. Catalyzes the anti-1,4-elimination of the C-3 phosphate and the C-6 proR hydrogen from 5-enolpyruvylshikimate-3-phosphate (EPSP) to yield chorismate, which is the branch point compound that serves as the starting substrate for the three terminal pathways of aromatic amino acid biosynthesis. This reaction introduces a second double bond into the aromatic ring system. The sequence is that of Chorismate synthase from Bordetella pertussis (strain Tohama I / ATCC BAA-589 / NCTC 13251).